Reading from the N-terminus, the 238-residue chain is MTATITNKKSCSGSVEAGKTRLTTEWKPESQVPQYVKNELSKPHPNYILAFLNVVQQLKIQRRTGYLDLGIKECESISDHMYRLSIITMLIKDSRVNRDKCVRIALVHDIAESLVGDITPVDPIGKEEKHRREWETIKYLCNALIKPYNEIAAKEIMDDWLAYENVTSLEARYVKDIDKYEMLVQCFEYEREYKGTKNFDDFFGAVASIKTDEVKGWTSDLVVQRQKYFADLTQSITK.

The HD domain occupies 77-183 (ISDHMYRLSI…VKDIDKYEML (107 aa)). 7 residues coordinate a divalent metal cation: His80, His108, Asp109, Glu112, Asp117, Ile118, and Asp178.

This sequence belongs to the HDDC2 family. As to quaternary structure, homodimer. Mn(2+) is required as a cofactor. It depends on Co(2+) as a cofactor. Mg(2+) serves as cofactor.

It catalyses the reaction a 2'-deoxyribonucleoside 5'-phosphate + H2O = a 2'-deoxyribonucleoside + phosphate. Catalyzes the dephosphorylation of the nucleoside 5'-monophosphates deoxyadenosine monophosphate (dAMP), deoxycytidine monophosphate (dCMP), deoxyguanosine monophosphate (dGMP) and deoxythymidine monophosphate (dTMP). This chain is 5'-deoxynucleotidase YBR242W, found in Saccharomyces cerevisiae (strain ATCC 204508 / S288c) (Baker's yeast).